The chain runs to 156 residues: Cell division protein SepF (156 aa).

Basic and acidic residues predominate over residues 23–36 (SYEKEQTDMKKQQD). The tract at residues 23–50 (SYEKEQTDMKKQQDPPEQQDVTFPKAQP) is disordered.

The protein belongs to the SepF family. Homodimer. Interacts with FtsZ.

The protein localises to the cytoplasm. Its function is as follows. Cell division protein that is part of the divisome complex and is recruited early to the Z-ring. Probably stimulates Z-ring formation, perhaps through the cross-linking of FtsZ protofilaments. Its function overlaps with FtsA. In Bacillus thuringiensis (strain Al Hakam), this protein is Cell division protein SepF.